A 128-amino-acid polypeptide reads, in one-letter code: Aspartate 1-decarboxylase (128 aa).

Serine 25 (schiff-base intermediate with substrate; via pyruvic acid) is an active-site residue. Residue serine 25 is modified to Pyruvic acid (Ser). Threonine 57 is a substrate binding site. Tyrosine 58 functions as the Proton donor in the catalytic mechanism. Residue 73–75 (GAA) participates in substrate binding.

Belongs to the PanD family. In terms of assembly, heterooctamer of four alpha and four beta subunits. The cofactor is pyruvate. Is synthesized initially as an inactive proenzyme, which is activated by self-cleavage at a specific serine bond to produce a beta-subunit with a hydroxyl group at its C-terminus and an alpha-subunit with a pyruvoyl group at its N-terminus.

The protein localises to the cytoplasm. The enzyme catalyses L-aspartate + H(+) = beta-alanine + CO2. The protein operates within cofactor biosynthesis; (R)-pantothenate biosynthesis; beta-alanine from L-aspartate: step 1/1. In terms of biological role, catalyzes the pyruvoyl-dependent decarboxylation of aspartate to produce beta-alanine. The sequence is that of Aspartate 1-decarboxylase from Chlorobaculum parvum (strain DSM 263 / NCIMB 8327) (Chlorobium vibrioforme subsp. thiosulfatophilum).